The sequence spans 1440 residues: Pentatricopeptide repeat-containing protein At3g18110, chloroplastic (1440 aa).

Residues methionine 1 to arginine 44 constitute a chloroplast transit peptide. Residues threonine 63–valine 72 are compositionally biased toward polar residues. Residues threonine 63–valine 84 form a disordered region. PPR repeat units follow at residues arginine 224 to proline 258, aspartate 259 to proline 295, aspartate 296 to proline 330, aspartate 331 to proline 365, aspartate 366 to lysine 400, aspartate 401 to leucine 431, aspartate 437 to proline 471, threonine 472 to proline 506, aspartate 507 to proline 541, serine 542 to leucine 572, glutamate 608 to histidine 638, lysine 643 to phenylalanine 678, serine 680 to alanine 714, serine 715 to phenylalanine 749, cysteine 751 to proline 785, aspartate 786 to proline 820, threonine 821 to isoleucine 855, serine 856 to proline 890, threonine 891 to valine 925, glutamate 926 to proline 960, aspartate 961 to proline 995, lysine 996 to leucine 1030, aspartate 1031 to proline 1065, threonine 1066 to leucine 1100, and threonine 1101 to proline 1135. A disordered region spans residues lysine 1419–lysine 1440.

The protein belongs to the PPR family. P subfamily.

It is found in the plastid. The protein localises to the chloroplast. Functionally, may play a role in embryogenesis. This Arabidopsis thaliana (Mouse-ear cress) protein is Pentatricopeptide repeat-containing protein At3g18110, chloroplastic (EMB1270).